A 1257-amino-acid polypeptide reads, in one-letter code: Stromal processing peptidase, chloroplastic (1257 aa).

The N-terminal 142 residues, 1–142 (MAASTSTSSL…ASVKRVQLPH (142 aa)), are a transit peptide targeting the chloroplast. Zn(2+) is bound at residue His236. The active-site Proton acceptor is Glu239. Position 240 (His240) interacts with Zn(2+). Residue Glu309 is part of the active site. Position 316 (Glu316) interacts with Zn(2+). The disordered stretch occupies residues 1233–1257 (EEAGEGYPGVLPMGRGLSTMTRPTT).

It belongs to the peptidase M16 family. Zn(2+) serves as cofactor.

The protein localises to the plastid. It is found in the chloroplast stroma. Functionally, cleaves presequences (transit peptides) from chloroplastic protein precursors. Initially recognizes a precursor by binding to the C-terminus of its transit peptide and then removes the transit peptide in a single endoproteolytic step. In a next step, pursues the cleavage of transit peptide to a subfragment form. The polypeptide is Stromal processing peptidase, chloroplastic (Pisum sativum (Garden pea)).